Reading from the N-terminus, the 90-residue chain is Probable Fe(2+)-trafficking protein (90 aa).

This sequence belongs to the Fe(2+)-trafficking protein family.

Functionally, could be a mediator in iron transactions between iron acquisition and iron-requiring processes, such as synthesis and/or repair of Fe-S clusters in biosynthetic enzymes. This Aliivibrio salmonicida (strain LFI1238) (Vibrio salmonicida (strain LFI1238)) protein is Probable Fe(2+)-trafficking protein.